A 201-amino-acid chain; its full sequence is Female-specific protein transformer (201 aa).

Residues 1–117 form a disordered region; sequence MDADSSSRSP…RSRSRSRTPR (117 aa). Over residues 9-37 the composition is skewed to basic and acidic residues; sequence SPRDTRTCARPKEKVPYFADEGRERDRVR. Basic residues-rich tracts occupy residues 38 to 62 and 99 to 115; these read NLRH…RARS and KQRR…RSRT.

The protein resides in the nucleus speckle. Member of the regulatory pathway controlling female somatic sexual differentiation, regulated by Sxl. Activates dsx female-specific splicing by promoting the formation of a splicing enhancer complex which consists of tra, tra2 and sr proteins. This Drosophila hydei (Fruit fly) protein is Female-specific protein transformer (tra).